Reading from the N-terminus, the 404-residue chain is Probable tRNA sulfurtransferase (404 aa).

The region spanning 60-165 is the THUMP domain; it reads QPVVEALKLV…DEAAYISYEE (106 aa). Residues 183–184, 208–209, Arg-265, Gly-287, and Gln-296 contribute to the ATP site; these read ML and HF.

Belongs to the ThiI family.

It is found in the cytoplasm. The catalysed reaction is [ThiI sulfur-carrier protein]-S-sulfanyl-L-cysteine + a uridine in tRNA + 2 reduced [2Fe-2S]-[ferredoxin] + ATP + H(+) = [ThiI sulfur-carrier protein]-L-cysteine + a 4-thiouridine in tRNA + 2 oxidized [2Fe-2S]-[ferredoxin] + AMP + diphosphate. It catalyses the reaction [ThiS sulfur-carrier protein]-C-terminal Gly-Gly-AMP + S-sulfanyl-L-cysteinyl-[cysteine desulfurase] + AH2 = [ThiS sulfur-carrier protein]-C-terminal-Gly-aminoethanethioate + L-cysteinyl-[cysteine desulfurase] + A + AMP + 2 H(+). Its pathway is cofactor biosynthesis; thiamine diphosphate biosynthesis. Functionally, catalyzes the ATP-dependent transfer of a sulfur to tRNA to produce 4-thiouridine in position 8 of tRNAs, which functions as a near-UV photosensor. Also catalyzes the transfer of sulfur to the sulfur carrier protein ThiS, forming ThiS-thiocarboxylate. This is a step in the synthesis of thiazole, in the thiamine biosynthesis pathway. The sulfur is donated as persulfide by IscS. The polypeptide is Probable tRNA sulfurtransferase (Streptococcus pyogenes serotype M6 (strain ATCC BAA-946 / MGAS10394)).